The following is a 232-amino-acid chain: MENQPKLNSSKEVIAFLAERFPHCFSAEGEARPLKIGIFQDLVDRVAGEMNLSKTQLRSALRLYTSSWRYLYGVKPGATRVDLDGNPCGELDEQHVEHARKQLEEAKARVQAQRAEQQAKKREAAAAAGEKEDAPPRERKPRPTTPRRKEGAERKPRAQKPVEKAPKTVKAPREEQHTPVSDISALTVGQALKVKAGQNAMDATVLEITKDGVRVQLNSGMSLIVRAEHLVF.

The disordered stretch occupies residues 105–182; that stretch reads EAKARVQAQR…REEQHTPVSD (78 aa). Basic and acidic residues-rich tracts occupy residues 117-138 and 147-177; these read QQAKKREAAAAAGEKEDAPPRE and RRKEGAERKPRAQKPVEKAPKTVKAPREEQH.

Belongs to the ProQ family.

The protein resides in the cytoplasm. RNA chaperone with significant RNA binding, RNA strand exchange and RNA duplexing activities. May regulate ProP activity through an RNA-based, post-transcriptional mechanism. The sequence is that of RNA chaperone ProQ from Escherichia coli O139:H28 (strain E24377A / ETEC).